A 67-amino-acid polypeptide reads, in one-letter code: Conotoxin AbVIO (67 aa).

Residues 1-17 (VIIIAVLFLTACQLIAT) form the signal peptide. The propeptide occupies 18–40 (ASYARSERKHPDLRLSSRNSKLS). 3 disulfide bridges follow: cysteine 43/cysteine 57, cysteine 50/cysteine 61, and cysteine 56/cysteine 66.

Belongs to the conotoxin O1 superfamily. Expressed by the venom duct.

The protein resides in the secreted. The sequence is that of Conotoxin AbVIO from Conus abbreviatus (Abbreviated cone).